We begin with the raw amino-acid sequence, 137 residues long: uncharacterized protein (137 aa).

The chain crosses the membrane as a helical span at residues 111–131 (LAVGVLVGSNLVVGSLVFALL).

It localises to the membrane. This is an uncharacterized protein from Saccharomyces cerevisiae (strain ATCC 204508 / S288c) (Baker's yeast).